We begin with the raw amino-acid sequence, 617 residues long: V-type proton ATPase catalytic subunit A (617 aa).

At D2 the chain carries N-acetylalanine. At T136 the chain carries Phosphothreonine. Position 250–257 (250–257) interacts with ATP; the sequence is GAFGCGKT. A Phosphoserine; by AMPK modification is found at S384.

This sequence belongs to the ATPase alpha/beta chains family. V-ATPase is a heteromultimeric enzyme made up of two complexes: the ATP-hydrolytic V1 complex and the proton translocation V0 complex. The V1 complex consists of three catalytic AB heterodimers that form a heterohexamer, three peripheral stalks each consisting of EG heterodimers, one central rotor including subunits D and F, and the regulatory subunits C and H. The proton translocation complex V0 consists of the proton transport subunit a, a ring of proteolipid subunits c9c'', rotary subunit d, subunits e and f, and the accessory subunits ATP6AP1/Ac45 and ATP6AP2/PRR. Interacts with the V0 complex V-ATPase subunit a4 ATP6V0A4. Interacts with WFS1. Interacts with alpha-crystallin B chain/CRYAB and with MTOR, forming a ternary complex. As to quaternary structure, (Microbial infection) Interacts with Rabies virus protein M; this interaction promotes virion uncoating. In terms of processing, phosphorylation at Ser-384 by AMPK down-regulates its enzyme activity. As to expression, high expression in the skin.

It localises to the cytoplasm. Its subcellular location is the cytosol. The protein localises to the cytoplasmic vesicle. It is found in the secretory vesicle. The protein resides in the clathrin-coated vesicle membrane. It localises to the lysosome. The catalysed reaction is ATP + H2O + 4 H(+)(in) = ADP + phosphate + 5 H(+)(out). Its activity is regulated as follows. ATP hydrolysis occurs at the interface between the nucleotide-binding domains of subunits A and B. ATP hydrolysis triggers a conformational change in the subunits D and F, which induces a shift of subunit d. The c-ring is subsequently rotated and results in a continuous proton translocation across the membrane. Functionally, catalytic subunit of the V1 complex of vacuolar(H+)-ATPase (V-ATPase), a multisubunit enzyme composed of a peripheral complex (V1) that hydrolyzes ATP and a membrane integral complex (V0) that translocates protons. V-ATPase is responsible for acidifying and maintaining the pH of intracellular compartments and in some cell types, is targeted to the plasma membrane, where it is responsible for acidifying the extracellular environment. In aerobic conditions, involved in intracellular iron homeostasis, thus triggering the activity of Fe(2+) prolyl hydroxylase (PHD) enzymes, and leading to HIF1A hydroxylation and subsequent proteasomal degradation. May play a role in neurite development and synaptic connectivity. In terms of biological role, (Microbial infection) Plays an important role in virion uncoating during Rabies virus replication after membrane fusion. Specifically, participates in the dissociation of incoming viral matrix M proteins uncoating through direct interaction. This chain is V-type proton ATPase catalytic subunit A (ATP6V1A), found in Homo sapiens (Human).